Consider the following 400-residue polypeptide: Nicotinate phosphoribosyltransferase (400 aa).

His-220 bears the Phosphohistidine; by autocatalysis mark.

This sequence belongs to the NAPRTase family. Transiently phosphorylated on a His residue during the reaction cycle. Phosphorylation strongly increases the affinity for substrates and increases the rate of nicotinate D-ribonucleotide production. Dephosphorylation regenerates the low-affinity form of the enzyme, leading to product release.

It catalyses the reaction nicotinate + 5-phospho-alpha-D-ribose 1-diphosphate + ATP + H2O = nicotinate beta-D-ribonucleotide + ADP + phosphate + diphosphate. Its pathway is cofactor biosynthesis; NAD(+) biosynthesis; nicotinate D-ribonucleotide from nicotinate: step 1/1. Catalyzes the synthesis of beta-nicotinate D-ribonucleotide from nicotinate and 5-phospho-D-ribose 1-phosphate at the expense of ATP. This chain is Nicotinate phosphoribosyltransferase, found in Escherichia coli O45:K1 (strain S88 / ExPEC).